Reading from the N-terminus, the 347-residue chain is N-acetyl-gamma-glutamyl-phosphate reductase (347 aa).

The active site involves C151.

This sequence belongs to the NAGSA dehydrogenase family. Type 1 subfamily.

The protein localises to the cytoplasm. It catalyses the reaction N-acetyl-L-glutamate 5-semialdehyde + phosphate + NADP(+) = N-acetyl-L-glutamyl 5-phosphate + NADPH + H(+). It functions in the pathway amino-acid biosynthesis; L-arginine biosynthesis; N(2)-acetyl-L-ornithine from L-glutamate: step 3/4. Catalyzes the NADPH-dependent reduction of N-acetyl-5-glutamyl phosphate to yield N-acetyl-L-glutamate 5-semialdehyde. The polypeptide is N-acetyl-gamma-glutamyl-phosphate reductase (Pelotomaculum thermopropionicum (strain DSM 13744 / JCM 10971 / SI)).